Here is a 122-residue protein sequence, read N- to C-terminus: Small ribosomal subunit protein uS13 (122 aa).

Residues K94–K122 are disordered.

It belongs to the universal ribosomal protein uS13 family. In terms of assembly, part of the 30S ribosomal subunit. Forms a loose heterodimer with protein S19. Forms two bridges to the 50S subunit in the 70S ribosome.

Located at the top of the head of the 30S subunit, it contacts several helices of the 16S rRNA. In the 70S ribosome it contacts the 23S rRNA (bridge B1a) and protein L5 of the 50S subunit (bridge B1b), connecting the 2 subunits; these bridges are implicated in subunit movement. Contacts the tRNAs in the A and P-sites. The polypeptide is Small ribosomal subunit protein uS13 (Methylorubrum extorquens (strain PA1) (Methylobacterium extorquens)).